The primary structure comprises 1090 residues: UPF0507 protein EC1118_1M3_1541g (1090 aa).

The 148-residue stretch at 289 to 436 folds into the VPS9 domain; that stretch reads FSVNQLLTDF…FEDFNKNTGN (148 aa).

The protein belongs to the UPF0507 family.

This is UPF0507 protein EC1118_1M3_1541g from Saccharomyces cerevisiae (strain Lalvin EC1118 / Prise de mousse) (Baker's yeast).